Reading from the N-terminus, the 608-residue chain is MESPVALLLLLLLCLGALAPTPGSASSEAPPLVNEDVKRTVDLSSHLAKVTAEVVLVHPGGGSTSRASSFVLALEPELESRLAHLGVQIKGEDEEDNNLEVRETKIKGKSGRFFTVKLPVALDPGSKISVVVETVYTHVLHPYPTQITQSEKQFVVFEGNHYFYSPYPTKTQTMRVKLASRNVESYTKLGNPSRSEDVLDYGPFKDIPAYSQDTFKVHYENNSPFLTITSMTRVIEVSHWGNIAVEENVDLKHTGAVLKGPFSRYDYQRQPDSGISSIRSFKTILPAAAQDVYYRDEIGNVSTSHLLILDDSVEMEIRPRFPLFGGWKTHYIVGYNLPSYEYLYNLGDQYALKMRFVDHVFDEQVIDSLTVKIILPEGAKNIQVDSPYDISRAPDELHYTYLDTFGRPVIVAYKKNLVEQHIQDIVVHYTFNKVLMLQEPLLVVAAFYILFFTVIIYVRLDFSITKDPAAEARMKVACITEQVLTLVNKRLGLYRHFDETVNRYKQSRDISTLNSGKKSLETEHKAVTSEIAVLQSRLKTEGSDLCDRVSEMQKLDAQVKELVLKSAVEAERLVAGKLKKDTYLENEKLSSGKRQELVTKIDHILDAL.

A signal peptide spans 1-25 (MESPVALLLLLLLCLGALAPTPGSA). The Lumenal portion of the chain corresponds to 26 to 440 (SSEAPPLVNE…FNKVLMLQEP (415 aa)). An N6-acetyllysine modification is found at Lys188. A glycan (N-linked (GlcNAc...) asparagine) is linked at Asn300. A helical transmembrane segment spans residues 441-458 (LLVVAAFYILFFTVIIYV). Residues 459 to 608 (RLDFSITKDP…TKIDHILDAL (150 aa)) lie on the Cytoplasmic side of the membrane. An N6-acetyllysine; alternate modification is found at Lys539. Lys539 is covalently cross-linked (Glycyl lysine isopeptide (Lys-Gly) (interchain with G-Cter in SUMO2); alternate).

The protein belongs to the OST1 family. In terms of assembly, component of the oligosaccharyltransferase (OST) complex. OST exists in two different complex forms which contain common core subunits RPN1, RPN2, OST48, OST4, DAD1 and TMEM258, either STT3A or STT3B as catalytic subunits, and form-specific accessory subunits. STT3A complex assembly occurs through the formation of 3 subcomplexes. Subcomplex 1 contains RPN1 and TMEM258, subcomplex 2 contains the STT3A-specific subunits STT3A, DC2/OSTC, and KCP2 as well as the core subunit OST4, and subcomplex 3 contains RPN2, DAD1, and OST48. The STT3A complex can form stable complexes with the Sec61 complex or with both the Sec61 and TRAP complexes. Interacts with TMEM35A/NACHO. In terms of processing, ubiquitinated by the ECS(ASB11) complex. Ubiquitinated by RNF128, leading to degradation in a proteasome/lysosome-dependent manner. Post-translationally, ufmylated by UFL1 in response to endoplasmic reticulum stress, promoting reticulophagy of endoplasmic reticulum sheets.

The protein localises to the endoplasmic reticulum membrane. Its pathway is protein modification; protein glycosylation. Functionally, subunit of the oligosaccharyl transferase (OST) complex that catalyzes the initial transfer of a defined glycan (Glc(3)Man(9)GlcNAc(2) in eukaryotes) from the lipid carrier dolichol-pyrophosphate to an asparagine residue within an Asn-X-Ser/Thr consensus motif in nascent polypeptide chains, the first step in protein N-glycosylation. N-glycosylation occurs cotranslationally and the complex associates with the Sec61 complex at the channel-forming translocon complex that mediates protein translocation across the endoplasmic reticulum (ER). All subunits are required for a maximal enzyme activity. This chain is Dolichyl-diphosphooligosaccharide--protein glycosyltransferase subunit 1, found in Mus musculus (Mouse).